Consider the following 1506-residue polypeptide: ABC transporter C family member 9 (1506 aa).

11 helical membrane passes run 37–57 (MQVT…FGVV), 84–104 (ISLL…LLLF), 116–136 (VSVF…SVVV), 150–170 (MLRS…AHFI), 179–199 (FQDY…AVSI), 315–335 (AINA…PYLI), 350–370 (LNHG…ETVT), 427–447 (FIWY…AIYI), 452–472 (LGLG…CNYP), 541–561 (FILW…CMLM), and 567–587 (AGAV…IFGL). Residues 314 to 596 (AAINAVFAVV…LPDLLSALVQ (283 aa)) enclose the ABC transmembrane type-1 1 domain. The ABC transporter 1 domain maps to 630-853 (VEIENGAFSW…NIGFEVLVGA (224 aa)). 665–672 (GAVGSGKS) lines the ATP pocket. The next 5 helical transmembrane spans lie at 934 to 956 (LLVP…SNYW), 976 to 996 (ILLV…ARTI), 1048 to 1068 (MAVK…TIFV), 1167 to 1187 (LSHF…EGVI), and 1191 to 1211 (IAGL…TVIW). Positions 936-1218 (VPFIILAQSC…VIWNICNAEN (283 aa)) constitute an ABC transmembrane type-1 2 domain. One can recognise an ABC transporter 2 domain in the interval 1257 to 1489 (FRDLQVRYAE…EDSFFSKLIK (233 aa)). 1289 to 1296 (GRTGSGKS) contributes to the ATP binding site.

The protein belongs to the ABC transporter superfamily. ABCC family. Conjugate transporter (TC 3.A.1.208) subfamily. In terms of tissue distribution, ubiquitous.

It localises to the membrane. It carries out the reaction ATP + H2O + xenobioticSide 1 = ADP + phosphate + xenobioticSide 2.. Functionally, pump for glutathione S-conjugates. The chain is ABC transporter C family member 9 (ABCC9) from Arabidopsis thaliana (Mouse-ear cress).